The following is a 150-amino-acid chain: Protein SprT-like (150 aa).

Positions 6-147 (LQKLTEDISE…CGKCRGKIKR (142 aa)) constitute a SprT-like domain. Histidine 67 serves as a coordination point for Zn(2+). Glutamate 68 is a catalytic residue. Histidine 71 is a Zn(2+) binding site.

Belongs to the SprT family. Zn(2+) is required as a cofactor.

The protein resides in the cytoplasm. In Bacillus subtilis (strain 168), this protein is Protein SprT-like (ydcK).